The chain runs to 96 residues: Putative pterin-4-alpha-carbinolamine dehydratase (96 aa).

It belongs to the pterin-4-alpha-carbinolamine dehydratase family.

The enzyme catalyses (4aS,6R)-4a-hydroxy-L-erythro-5,6,7,8-tetrahydrobiopterin = (6R)-L-erythro-6,7-dihydrobiopterin + H2O. The chain is Putative pterin-4-alpha-carbinolamine dehydratase from Caulobacter sp. (strain K31).